Consider the following 479-residue polypeptide: Something about silencing protein 10 (479 aa).

Basic residues predominate over residues 1–10 (MVGRSRRRGA). Disordered stretches follow at residues 1 to 45 (MVGR…SYYQ) and 62 to 166 (KGWN…EEAQ). Omega-N-methylarginine is present on arginine 8. A compositionally biased stretch (low complexity) spans 11–21 (AKWAAVRAKAG). A Phosphoserine modification is found at serine 37. Positions 69 to 111 (SGDEEDGEEEEEEVLALDMDDEDDEDGGNAGEEEEEENADDDG) are enriched in acidic residues. Position 144 is an N6-acetyllysine; alternate (lysine 144). Lysine 144 is covalently cross-linked (Glycyl lysine isopeptide (Lys-Gly) (interchain with G-Cter in SUMO2); alternate). Serine 150 carries the post-translational modification Phosphoserine. The span at 153–165 (EAEEEEREEEEEA) shows a compositional bias: acidic residues. Threonine 362 is subject to Phosphothreonine. 2 positions are modified to phosphoserine: serine 365 and serine 368. At arginine 385 the chain carries Citrulline. The disordered stretch occupies residues 419–466 (RGLTPRRKKIDRNPRVKHREKFRRAKIRRRGQVREVRKEEQRYSGELS). Residues 422-449 (TPRRKKIDRNPRVKHREKFRRAKIRRRG) show a composition bias toward basic residues. The segment covering 450 to 461 (QVREVRKEEQRY) has biased composition (basic and acidic residues).

This sequence belongs to the SAS10 family. As to quaternary structure, part of the small subunit (SSU) processome, composed of more than 70 proteins and the RNA chaperone small nucleolar RNA (snoRNA) U3. Post-translationally, citrullinated by PADI4.

Its subcellular location is the nucleus. The protein resides in the nucleolus. Essential for gene silencing: has a role in the structure of silenced chromatin. Plays a role in the developing brain. Part of the small subunit (SSU) processome, first precursor of the small eukaryotic ribosomal subunit. During the assembly of the SSU processome in the nucleolus, many ribosome biogenesis factors, an RNA chaperone and ribosomal proteins associate with the nascent pre-rRNA and work in concert to generate RNA folding, modifications, rearrangements and cleavage as well as targeted degradation of pre-ribosomal RNA by the RNA exosome. The chain is Something about silencing protein 10 from Homo sapiens (Human).